The following is a 606-amino-acid chain: Vitamin B12 transporter BtuB (606 aa).

The N-terminal stretch at 1–21 (MKKTLLAVALAPLCLPSQVFA) is a signal peptide. A TonB box motif is present at residues 28–35 (DVMVVTAN). In terms of domain architecture, TBDR plug spans 40–152 (PIKNVIAPIS…IGGVLNIITA (113 aa)). The TBDR beta-barrel domain maps to 157-606 (ESVAEVTAGG…SYYATATYKF (450 aa)). Positions 589–606 (ETYNVQERSYYATATYKF) match the TonB C-terminal box motif.

Belongs to the TonB-dependent receptor family. BtuB (TC 1.B.14.3.1) subfamily.

It is found in the cell outer membrane. Functionally, involved in the active translocation of vitamin B12 (cyanocobalamin) across the outer membrane to the periplasmic space. It derives its energy for transport by interacting with the trans-periplasmic membrane protein TonB. The chain is Vitamin B12 transporter BtuB from Photobacterium profundum (strain SS9).